Reading from the N-terminus, the 100-residue chain is Integration host factor subunit alpha (100 aa).

Positions 53 to 73 (FDLRDKRQRPGRNPKTGEEIP) are disordered.

It belongs to the bacterial histone-like protein family. As to quaternary structure, heterodimer of an alpha and a beta chain.

Functionally, this protein is one of the two subunits of integration host factor, a specific DNA-binding protein that functions in genetic recombination as well as in transcriptional and translational control. The chain is Integration host factor subunit alpha from Pseudomonas aeruginosa (strain LESB58).